The primary structure comprises 578 residues: Arginine--tRNA ligase (578 aa).

A 'HIGH' region motif is present at residues 127-137 (PNLAKEMHVGH).

The protein belongs to the class-I aminoacyl-tRNA synthetase family. In terms of assembly, monomer.

The protein localises to the cytoplasm. The enzyme catalyses tRNA(Arg) + L-arginine + ATP = L-arginyl-tRNA(Arg) + AMP + diphosphate. This is Arginine--tRNA ligase from Pseudomonas fluorescens (strain ATCC BAA-477 / NRRL B-23932 / Pf-5).